We begin with the raw amino-acid sequence, 151 residues long: Small ribosomal subunit protein uS15 (151 aa).

The protein belongs to the universal ribosomal protein uS15 family.

This chain is Small ribosomal subunit protein uS15 (RpS13), found in Anopheles gambiae (African malaria mosquito).